Reading from the N-terminus, the 514-residue chain is Histidine ammonia-lyase (514 aa).

Residues 146 to 148 (ASG) constitute a cross-link (5-imidazolinone (Ala-Gly)). Ser147 carries the 2,3-didehydroalanine (Ser) modification.

This sequence belongs to the PAL/histidase family. Contains an active site 4-methylidene-imidazol-5-one (MIO), which is formed autocatalytically by cyclization and dehydration of residues Ala-Ser-Gly.

The protein localises to the cytoplasm. It carries out the reaction L-histidine = trans-urocanate + NH4(+). It functions in the pathway amino-acid degradation; L-histidine degradation into L-glutamate; N-formimidoyl-L-glutamate from L-histidine: step 1/3. The polypeptide is Histidine ammonia-lyase (Clostridium tetani (strain Massachusetts / E88)).